Reading from the N-terminus, the 549-residue chain is OBERON-like protein (549 aa).

A disordered region spans residues 1–56 (MLPPRQQPRPGGLQTSLSLVSPDACGSPNPQERGSTSDQARDSPSESASSRETWPT). 2 stretches are compositionally biased toward polar residues: residues 28-38 (PNPQERGSTSD) and 45-56 (SESASSRETWPT). The PHD-type zinc-finger motif lies at 224 to 288 (LCMCVICYKF…LFRCHACSRT (65 aa)). The stretch at 394-520 (VQEAIRKMEA…YLFEKIKLQE (127 aa)) forms a coiled coil. The interval 519–549 (QESSRASQSSAGGNDPSQMMYSKIQDLIKNM) is disordered. The segment covering 521–538 (SSRASQSSAGGNDPSQMM) has biased composition (polar residues).

In terms of assembly, self-interacts and probably forms heteromers. Binds to VPg of pea seed borne mosaic virus (PSbMV), turnip mosaic virus (TuMV) and lettuce mosaic virus (LMV), but not with VPg of tobacco etch virus (TEV), cowpea mosaic virus (CPMV), tomato black ring virus (TBRV) and grapevine fan leaf virus (GFLV).

It localises to the nucleus. Its function is as follows. Required for the maintenance and/or establishment of both the shoot and root meristems, probably by controlling the expression of the meristem genes and of genes required for auxin responses. Involved in the development of the basal pole and in auxin-mediated root and vascular development in the embryo. Confers sensitivity to turnip mosaic virus (TuMV) probably by promoting viral movement and multiplication via interaction with TuMV VPg. This is OBERON-like protein (PVIP) from Nicotiana benthamiana.